The primary structure comprises 568 residues: Clathrin coat assembly protein AP180B (568 aa).

In terms of domain architecture, ENTH spans 1–127 (MSSLYTKLVK…EEYGRLGMDH (127 aa)). The segment covering 262–283 (HLREETKRQRGEPSEPQQDRKP) has biased composition (basic and acidic residues). The segment at 262–302 (HLREETKRQRGEPSEPQQDRKPSTAISSTSSHNNNSNDKNK) is disordered. Residue Lys-282 forms a Glycyl lysine isopeptide (Lys-Gly) (interchain with G-Cter in ubiquitin) linkage. Low complexity predominate over residues 284–298 (STAISSTSSHNNNSN). Thr-449 bears the Phosphothreonine mark.

The protein belongs to the AP180 family. As to quaternary structure, interacts with PAN1 and the clathrin heavy and light chains CHC1 and CLC1.

The protein resides in the bud. The protein localises to the bud neck. It is found in the cell membrane. It localises to the cytoplasm. Its function is as follows. Involved in endocytosis and clathrin cage assembly. The chain is Clathrin coat assembly protein AP180B (YAP1802) from Saccharomyces cerevisiae (strain ATCC 204508 / S288c) (Baker's yeast).